The chain runs to 91 residues: Na(+)/H(+) antiporter subunit F (91 aa).

3 helical membrane-spanning segments follow: residues 5 to 27, 34 to 53, and 63 to 82; these read ILMI…TLIG, IVAL…VIMM, and VVLV…SKFI.

The protein belongs to the CPA3 antiporters (TC 2.A.63) subunit F family. As to quaternary structure, forms a heterooligomeric complex that consists of seven subunits: MrpA, MrpB, MrpC, MrpD, MrpE, MrpF and MrpG.

It localises to the cell membrane. In terms of biological role, mnh complex is a Na(+)Li(+)/H(+) antiporter involved in Na(+) and/or Li(+) excretion and Na(+) resistance. Na(+)/H(+) antiport consumes a transmembrane electrical potential, and is thus inferred to be electrogenic. Does not transport K(+), Ca(2+) or Mg(2+). This is Na(+)/H(+) antiporter subunit F (mrpF) from Alkalihalophilus pseudofirmus (strain ATCC BAA-2126 / JCM 17055 / OF4) (Bacillus pseudofirmus).